We begin with the raw amino-acid sequence, 708 residues long: Metal-pseudopaline receptor CntO (708 aa).

The first 21 residues, 1 to 21, serve as a signal peptide directing secretion; the sequence is MRVSVSLVLGVGLGCSSPALW. One can recognise a TBDR plug domain in the interval 63 to 169; the sequence is RIEDIPQAIS…PGGTVNLVTK (107 aa). The region spanning 174 to 708 is the TBDR beta-barrel domain; sequence ERFARLHASA…NLTMSLTLNY (535 aa).

It belongs to the TonB-dependent receptor family.

It localises to the cell outer membrane. Its function is as follows. Transports the metallophore pseudopaline, which is involved in the acquisition of nickel and zinc, and thus enables bacterial growth inside the host, where metal access is limited. Is probably involved in the import of pseudopaline-metal complexes. In Pseudomonas aeruginosa (strain UCBPP-PA14), this protein is Metal-pseudopaline receptor CntO.